Reading from the N-terminus, the 365-residue chain is Alanine racemase (365 aa).

K36 functions as the Proton acceptor; specific for D-alanine in the catalytic mechanism. Position 36 is an N6-(pyridoxal phosphate)lysine (K36). A substrate-binding site is contributed by R132. Residue Y257 is the Proton acceptor; specific for L-alanine of the active site. A substrate-binding site is contributed by M305.

It belongs to the alanine racemase family. It depends on pyridoxal 5'-phosphate as a cofactor.

It catalyses the reaction L-alanine = D-alanine. Its pathway is amino-acid biosynthesis; D-alanine biosynthesis; D-alanine from L-alanine: step 1/1. Its function is as follows. Catalyzes the interconversion of L-alanine and D-alanine. May also act on other amino acids. The polypeptide is Alanine racemase (alr) (Xylella fastidiosa (strain Temecula1 / ATCC 700964)).